Consider the following 288-residue polypeptide: Bifunctional protein FolD (288 aa).

NADP(+)-binding positions include 166 to 168, Ser-191, and Ile-232; that span reads GRS.

This sequence belongs to the tetrahydrofolate dehydrogenase/cyclohydrolase family. Homodimer.

The catalysed reaction is (6R)-5,10-methylene-5,6,7,8-tetrahydrofolate + NADP(+) = (6R)-5,10-methenyltetrahydrofolate + NADPH. It carries out the reaction (6R)-5,10-methenyltetrahydrofolate + H2O = (6R)-10-formyltetrahydrofolate + H(+). Its pathway is one-carbon metabolism; tetrahydrofolate interconversion. In terms of biological role, catalyzes the oxidation of 5,10-methylenetetrahydrofolate to 5,10-methenyltetrahydrofolate and then the hydrolysis of 5,10-methenyltetrahydrofolate to 10-formyltetrahydrofolate. In Rickettsia africae (strain ESF-5), this protein is Bifunctional protein FolD.